The chain runs to 234 residues: MQLITTENKLAGSKKALEIIEKGITSGEVNTLGLATGSTPETLYAELVKSDVDTKNVTTTNLDEYVGLAANDPNSYHYYMNELLFSKKAFKESFLPNGEATDAEAECARYEEILSEHPIDIQVLGIGTNGHIGFNEPGTPFDSLTHKVVLTDSTREANKRFFEREEDVPTHAYSMGIKSIMNAKKIILLAFGENKAQAIKETIKGPVDVNCPASVLQNHPDVTVILDNEAASLL.

Asp63 serves as the catalytic Proton acceptor; for enolization step. Asn129 acts as the For ring-opening step in catalysis. His131 acts as the Proton acceptor; for ring-opening step in catalysis. Glu136 functions as the For ring-opening step in the catalytic mechanism.

The protein belongs to the glucosamine/galactosamine-6-phosphate isomerase family. NagB subfamily.

It carries out the reaction alpha-D-glucosamine 6-phosphate + H2O = beta-D-fructose 6-phosphate + NH4(+). Its pathway is amino-sugar metabolism; N-acetylneuraminate degradation; D-fructose 6-phosphate from N-acetylneuraminate: step 5/5. Functionally, catalyzes the reversible isomerization-deamination of glucosamine 6-phosphate (GlcN6P) to form fructose 6-phosphate (Fru6P) and ammonium ion. The sequence is that of Glucosamine-6-phosphate deaminase from Listeria monocytogenes serotype 4b (strain CLIP80459).